A 297-amino-acid polypeptide reads, in one-letter code: Guanylate kinase (297 aa).

The 180-residue stretch at 5 to 184 folds into the Guanylate kinase-like domain; that stretch reads GKVIIISGPS…AVSKITDILI (180 aa). 12–19 lines the ATP pocket; that stretch reads GPSGVGKG. The tract at residues 205–297 is unknown; sequence ENIVDQKYTY…IKQRSDFSGD (93 aa).

Belongs to the guanylate kinase family.

It is found in the cytoplasm. It catalyses the reaction GMP + ATP = GDP + ADP. In terms of biological role, essential for recycling GMP and indirectly, cGMP. This chain is Guanylate kinase (gmk), found in Mesoplasma florum (strain ATCC 33453 / NBRC 100688 / NCTC 11704 / L1) (Acholeplasma florum).